A 125-amino-acid polypeptide reads, in one-letter code: Small ribosomal subunit protein uS13 (125 aa).

This sequence belongs to the universal ribosomal protein uS13 family. Part of the 30S ribosomal subunit. Forms a loose heterodimer with protein S19. Forms two bridges to the 50S subunit in the 70S ribosome.

Located at the top of the head of the 30S subunit, it contacts several helices of the 16S rRNA. In the 70S ribosome it contacts the 23S rRNA (bridge B1a) and protein L5 of the 50S subunit (bridge B1b), connecting the 2 subunits; these bridges are implicated in subunit movement. Contacts the tRNAs in the A and P-sites. The chain is Small ribosomal subunit protein uS13 from Gluconacetobacter diazotrophicus (strain ATCC 49037 / DSM 5601 / CCUG 37298 / CIP 103539 / LMG 7603 / PAl5).